The following is a 408-amino-acid chain: Phosphopentomutase (408 aa).

6 residues coordinate Mn(2+): Asp-10, Asp-303, His-308, Asp-344, His-345, and His-356.

The protein belongs to the phosphopentomutase family. It depends on Mn(2+) as a cofactor.

It is found in the cytoplasm. It carries out the reaction 2-deoxy-alpha-D-ribose 1-phosphate = 2-deoxy-D-ribose 5-phosphate. The catalysed reaction is alpha-D-ribose 1-phosphate = D-ribose 5-phosphate. The protein operates within carbohydrate degradation; 2-deoxy-D-ribose 1-phosphate degradation; D-glyceraldehyde 3-phosphate and acetaldehyde from 2-deoxy-alpha-D-ribose 1-phosphate: step 1/2. Functionally, isomerase that catalyzes the conversion of deoxy-ribose 1-phosphate (dRib-1-P) and ribose 1-phosphate (Rib-1-P) to deoxy-ribose 5-phosphate (dRib-5-P) and ribose 5-phosphate (Rib-5-P), respectively. The chain is Phosphopentomutase from Tolumonas auensis (strain DSM 9187 / NBRC 110442 / TA 4).